A 180-amino-acid chain; its full sequence is NEDD8-conjugating enzyme ubc-12 (180 aa).

The region spanning 24 to 180 is the UBC core domain; it reads VRDKLLAQEL…RVREYISRYC (157 aa). Cys112 acts as the Glycyl thioester intermediate in catalysis.

Belongs to the ubiquitin-conjugating enzyme family. UBC12 subfamily.

The protein resides in the cytoplasm. It carries out the reaction [E1 NEDD8-activating enzyme]-S-[NEDD8 protein]-yl-L-cysteine + [E2 NEDD8-conjugating enzyme]-L-cysteine = [E1 NEDD8-activating enzyme]-L-cysteine + [E2 NEDD8-conjugating enzyme]-S-[NEDD8-protein]-yl-L-cysteine.. Its pathway is protein modification; protein neddylation. Accepts the ubiquitin-like protein NEDD8 from the uba-3-ula-1 E1 complex and catalyzes its covalent attachment to other proteins. Plays a role in male tail tip morphogenesis. This Caenorhabditis elegans protein is NEDD8-conjugating enzyme ubc-12.